Here is a 695-residue protein sequence, read N- to C-terminus: G-patch and R3H domain-containing protein C30B4.02c (695 aa).

Disordered regions lie at residues 168–200, 213–242, 257–317, 332–351, 388–448, and 475–517; these read SDKE…NDDS, DIAN…EFDI, FADL…FDEG, GNTD…DEDE, DSED…VAAR, and DKSK…DSDN. Residues 182–198 show a composition bias toward basic and acidic residues; sequence CYKEQESEKELYSKDND. Composition is skewed to acidic residues over residues 262–286, 307–317, and 337–351; these read VLEE…EEEE, EDSESLEFDEG, and LAED…DEDE. The span at 421-434 shows a compositional bias: basic residues; sequence KKDRKLPKKMRKAQ. One can recognise an R3H domain in the interval 525-587; sequence KIFINDVYQR…KRYTMLSKTH (63 aa). Residues 652–695 form the G-patch domain; it reads KENPGRRLLEKLGWYAGKGLGHPENEGSKDSLRAIVKVSRSGLG.

It is found in the cytoplasm. The sequence is that of G-patch and R3H domain-containing protein C30B4.02c from Schizosaccharomyces pombe (strain 972 / ATCC 24843) (Fission yeast).